The following is a 478-amino-acid chain: MKKILFVASESVPFIKTDGLADVVGSLPKYINKNNFDIRVILPNYMSIPRQWKEKMLYRTHFYMNLNWRTQYVGVLEYQYEGIWYYFIDNEFYFAGNKPYGNIYEDIEKFAFLSKAVLTCLPVLDFRPDIIHCHDWQTGLVPVFLHDSFQKNEFYHGIKTIMTIHNLKFQGVWDKKTVQDITALSEYYFSPDKLETYGDANYLKGGIVFSDYITTVSDTYAHDITMPFYGEGLDGLMRARSDCLCGIVNGIDYEEYNPEFDPFINKPYNAKNFRKEKIKNKRALQQELGLAKDDKAFMIGIVSRLIDQNGLDLIDCVMEDICAEDTQLIILGTGKDRYENLFRHYARKYSSRVSANIFYSNEQSHKIYAACDAFLMPSLFEPCGLSQLMSLRYGTVPIVRETGGLVDTVEPYNQHESTGTGFTFKNYNAHEMLYTIRFAKEIYQDKKREWNKIIDRGMAKDFSWKTSARKYEELYESL.

K16 contacts ADP-alpha-D-glucose.

The protein belongs to the glycosyltransferase 1 family. Bacterial/plant glycogen synthase subfamily.

It carries out the reaction [(1-&gt;4)-alpha-D-glucosyl](n) + ADP-alpha-D-glucose = [(1-&gt;4)-alpha-D-glucosyl](n+1) + ADP + H(+). The protein operates within glycan biosynthesis; glycogen biosynthesis. In terms of biological role, synthesizes alpha-1,4-glucan chains using ADP-glucose. The protein is Glycogen synthase of Lachnoclostridium phytofermentans (strain ATCC 700394 / DSM 18823 / ISDg) (Clostridium phytofermentans).